The primary structure comprises 145 residues: Large ribosomal subunit protein uL13 (145 aa).

This sequence belongs to the universal ribosomal protein uL13 family. As to quaternary structure, part of the 50S ribosomal subunit.

Its function is as follows. This protein is one of the early assembly proteins of the 50S ribosomal subunit, although it is not seen to bind rRNA by itself. It is important during the early stages of 50S assembly. The chain is Large ribosomal subunit protein uL13 from Bacillus cereus (strain G9842).